Reading from the N-terminus, the 252-residue chain is MLAKRIIPCLDVKEGRVVKGVNFIGLQDVGDPVEIAALYNDAGADEIVFLDITATHEGRKTIIDVVEKTASKVFIPLTVGGGISSVKDMYNLLRAGADKVSINSAAVRNPKLIEEGAQHFGSQCIVVAIDARKVAEGKWNVYVNGGRVDTGMDAIEWAKRVVMLGAGEILLTSMDADGTKNGYDLRLTEEISKSVSVPVIASGGCGHADHIIEVFQKTTVDAALAASIFHYGEVTIGDVKRKLRNANVEVRL.

Residues aspartate 11 and aspartate 130 contribute to the active site.

The protein belongs to the HisA/HisF family. In terms of assembly, heterodimer of HisH and HisF.

It is found in the cytoplasm. It carries out the reaction 5-[(5-phospho-1-deoxy-D-ribulos-1-ylimino)methylamino]-1-(5-phospho-beta-D-ribosyl)imidazole-4-carboxamide + L-glutamine = D-erythro-1-(imidazol-4-yl)glycerol 3-phosphate + 5-amino-1-(5-phospho-beta-D-ribosyl)imidazole-4-carboxamide + L-glutamate + H(+). The protein operates within amino-acid biosynthesis; L-histidine biosynthesis; L-histidine from 5-phospho-alpha-D-ribose 1-diphosphate: step 5/9. IGPS catalyzes the conversion of PRFAR and glutamine to IGP, AICAR and glutamate. The HisF subunit catalyzes the cyclization activity that produces IGP and AICAR from PRFAR using the ammonia provided by the HisH subunit. The chain is Imidazole glycerol phosphate synthase subunit HisF from Bacillus cereus (strain AH820).